The sequence spans 487 residues: Glutamate mutase epsilon subunit (487 aa).

R62 lines the L-glutamate pocket. G64 lines the adenosylcob(III)alamin pocket. R96 is a binding site for L-glutamate. An adenosylcob(III)alamin-binding site is contributed by N119. L-glutamate is bound by residues 145 to 146, E167, and Y173; that span reads RH. P176 lines the adenosylcob(III)alamin pocket. Residue Y177 coordinates L-glutamate. Adenosylcob(III)alamin-binding residues include F289, K318, and E322. A disordered region spans residues 465-487; sequence SDGKLIGRPGGDNSPAGGASDAD.

The protein belongs to the methylaspartate mutase GlmE subunit family. In terms of assembly, heterotetramer composed of 2 epsilon subunits (GlmE) and 2 sigma subunits (GlmS). GlmE exists as a homodimer and GlmS as a monomer. The cofactor is adenosylcob(III)alamin.

The enzyme catalyses (2S,3S)-3-methyl-L-aspartate = L-glutamate. The protein operates within amino-acid degradation; L-glutamate degradation via mesaconate pathway; acetate and pyruvate from L-glutamate: step 1/4. In terms of biological role, catalyzes the carbon skeleton rearrangement of L-glutamate to L-threo-3-methylaspartate ((2S,3S)-3-methylaspartate). This Haloarcula marismortui (strain ATCC 43049 / DSM 3752 / JCM 8966 / VKM B-1809) (Halobacterium marismortui) protein is Glutamate mutase epsilon subunit.